Reading from the N-terminus, the 880-residue chain is Leucine--tRNA ligase (880 aa).

The 'HIGH' region motif lies at 46–56 (PYPSGALHMGH). The interval 483-502 (SPIKTEPTWRQTTCPDCGGP) is disordered. A 'KMSKS' region motif is present at residues 638–642 (KMSKS). K641 provides a ligand contact to ATP.

It belongs to the class-I aminoacyl-tRNA synthetase family.

Its subcellular location is the cytoplasm. It carries out the reaction tRNA(Leu) + L-leucine + ATP = L-leucyl-tRNA(Leu) + AMP + diphosphate. This is Leucine--tRNA ligase from Xanthomonas oryzae pv. oryzae (strain PXO99A).